Consider the following 182-residue polypeptide: Cytidylate kinase (182 aa).

Position 7–15 (7–15 (GLPGSGTTS)) interacts with ATP.

The protein belongs to the cytidylate kinase family. Type 2 subfamily.

The protein localises to the cytoplasm. It catalyses the reaction CMP + ATP = CDP + ADP. The catalysed reaction is dCMP + ATP = dCDP + ADP. The polypeptide is Cytidylate kinase (Methanoregula boonei (strain DSM 21154 / JCM 14090 / 6A8)).